Here is a 195-residue protein sequence, read N- to C-terminus: Putative NADH dehydrogenase/NAD(P)H nitroreductase CC_0061 (195 aa).

Belongs to the nitroreductase family. HadB/RutE subfamily. FMN serves as cofactor.

The chain is Putative NADH dehydrogenase/NAD(P)H nitroreductase CC_0061 from Caulobacter vibrioides (strain ATCC 19089 / CIP 103742 / CB 15) (Caulobacter crescentus).